Consider the following 261-residue polypeptide: MKKRNITEFQVLSEIIRKQPHIKQKEIAENLGITVQAVSEHIRNLVKEGYVKSRGRGEYVVTEKGLRKLKNWISEFKDYLDEINTAVYRYKDIWPAIADEDVKDGETVYLFMKNGLLYASKQPKGEAKAKALYGGKKGEDIAICEIKGIIDVPKGKVIVFRIPPEVVGGSRAVDFNLIKENIDNLDDYVIATMGTVAYVVACKLGLKPDIRFAVPEAIVNACNRGCNVIALITGKMAEKVIKKLDNAKISYTVLDATKENK.

This is an uncharacterized protein from Methanocaldococcus jannaschii (strain ATCC 43067 / DSM 2661 / JAL-1 / JCM 10045 / NBRC 100440) (Methanococcus jannaschii).